A 149-amino-acid polypeptide reads, in one-letter code: 3-dehydroquinate dehydratase (149 aa).

Catalysis depends on Tyr24, which acts as the Proton acceptor. Substrate contacts are provided by Asn76, His82, and Asp89. The Proton donor role is filled by His102. Substrate-binding positions include 103–104 (LS) and Arg113.

Belongs to the type-II 3-dehydroquinase family. Homododecamer.

It catalyses the reaction 3-dehydroquinate = 3-dehydroshikimate + H2O. The protein operates within metabolic intermediate biosynthesis; chorismate biosynthesis; chorismate from D-erythrose 4-phosphate and phosphoenolpyruvate: step 3/7. Its function is as follows. Catalyzes a trans-dehydration via an enolate intermediate. The protein is 3-dehydroquinate dehydratase of Acinetobacter baylyi (strain ATCC 33305 / BD413 / ADP1).